We begin with the raw amino-acid sequence, 309 residues long: Mitochondrial fission regulator 1-like (309 aa).

The tract at residues 189 to 221 is disordered; that stretch reads DVTEEDEEEEEEEDREEEEEDVSELVPDPMPPV. Residues 190 to 211 show a composition bias toward acidic residues; it reads VTEEDEEEEEEEDREEEEEDVS. The residue at position 253 (S253) is a Phosphoserine.

The protein belongs to the MTFR1 family.

Its subcellular location is the mitochondrion outer membrane. Mitochondrial protein required for adaptation of miochondrial dynamics to metabolic changes. Regulates mitochondrial morphology at steady state and mediates AMPK-dependent stress-induced mitochondrial fragmentation via the control of OPA1 levels. In Danio rerio (Zebrafish), this protein is Mitochondrial fission regulator 1-like (mtfr1l).